The primary structure comprises 494 residues: Probable cobyric acid synthase (494 aa).

The 199-residue stretch at 249–447 folds into the GATase cobBQ-type domain; that stretch reads SVRIAVIRLP…LHGIFFNRRF (199 aa). The active-site Nucleophile is Cys331. His439 is a catalytic residue.

This sequence belongs to the CobB/CobQ family. CobQ subfamily.

It functions in the pathway cofactor biosynthesis; adenosylcobalamin biosynthesis. In terms of biological role, catalyzes amidations at positions B, D, E, and G on adenosylcobyrinic A,C-diamide. NH(2) groups are provided by glutamine, and one molecule of ATP is hydrogenolyzed for each amidation. The chain is Probable cobyric acid synthase from Methanopyrus kandleri (strain AV19 / DSM 6324 / JCM 9639 / NBRC 100938).